Here is a 185-residue protein sequence, read N- to C-terminus: Ribosome-recycling factor (185 aa).

The protein belongs to the RRF family.

The protein resides in the cytoplasm. Functionally, responsible for the release of ribosomes from messenger RNA at the termination of protein biosynthesis. May increase the efficiency of translation by recycling ribosomes from one round of translation to another. The chain is Ribosome-recycling factor from Bacillus cereus (strain ATCC 10987 / NRS 248).